Reading from the N-terminus, the 240-residue chain is Ribonuclease 3 (240 aa).

The 133-residue stretch at V9–G141 folds into the RNase III domain. E54 contributes to the Mg(2+) binding site. The active site involves D58. The Mg(2+) site is built by D127 and E130. Residue E130 is part of the active site. Residues D168–A237 enclose the DRBM domain.

Belongs to the ribonuclease III family. As to quaternary structure, homodimer. It depends on Mg(2+) as a cofactor.

It localises to the cytoplasm. The enzyme catalyses Endonucleolytic cleavage to 5'-phosphomonoester.. Functionally, digests double-stranded RNA. Involved in the processing of primary rRNA transcript to yield the immediate precursors to the large and small rRNAs (23S and 16S). Processes some mRNAs, and tRNAs when they are encoded in the rRNA operon. Processes pre-crRNA and tracrRNA of type II CRISPR loci if present in the organism. The chain is Ribonuclease 3 from Thermotoga neapolitana (strain ATCC 49049 / DSM 4359 / NBRC 107923 / NS-E).